Here is a 435-residue protein sequence, read N- to C-terminus: Probable histidine--tRNA ligase, cytoplasmic (435 aa).

This sequence belongs to the class-II aminoacyl-tRNA synthetase family.

It is found in the cytoplasm. It catalyses the reaction tRNA(His) + L-histidine + ATP = L-histidyl-tRNA(His) + AMP + diphosphate + H(+). This chain is Probable histidine--tRNA ligase, cytoplasmic, found in Encephalitozoon cuniculi (strain GB-M1) (Microsporidian parasite).